A 193-amino-acid chain; its full sequence is Thymidine kinase (193 aa).

ATP-binding positions include 9–16 and 87–90; these read STMNAGKS and DEAN. Glu-88 serves as the catalytic Proton acceptor. Residues Cys-145, Cys-147, Cys-182, and His-185 each coordinate Zn(2+).

Belongs to the thymidine kinase family. Homotetramer.

The protein localises to the cytoplasm. The catalysed reaction is thymidine + ATP = dTMP + ADP + H(+). This Agrobacterium fabrum (strain C58 / ATCC 33970) (Agrobacterium tumefaciens (strain C58)) protein is Thymidine kinase.